A 387-amino-acid polypeptide reads, in one-letter code: Phosphoglycerate kinase (387 aa).

Substrate is bound by residues 21 to 23, R36, 59 to 62, R113, and R146; these read DLN and HLGR. ATP contacts are provided by residues K197, E314, and 340-343; that span reads GGDT.

It belongs to the phosphoglycerate kinase family. Monomer.

Its subcellular location is the cytoplasm. The catalysed reaction is (2R)-3-phosphoglycerate + ATP = (2R)-3-phospho-glyceroyl phosphate + ADP. It participates in carbohydrate degradation; glycolysis; pyruvate from D-glyceraldehyde 3-phosphate: step 2/5. The protein is Phosphoglycerate kinase of Yersinia pestis bv. Antiqua (strain Antiqua).